The chain runs to 617 residues: Chaperone protein HscA homolog (617 aa).

It belongs to the heat shock protein 70 family.

Functionally, chaperone involved in the maturation of iron-sulfur cluster-containing proteins. Has a low intrinsic ATPase activity which is markedly stimulated by HscB. This chain is Chaperone protein HscA homolog, found in Vibrio campbellii (strain ATCC BAA-1116).